We begin with the raw amino-acid sequence, 424 residues long: C4-dicarboxylate transport protein (424 aa).

Transmembrane regions (helical) follow at residues 4–24, 44–64, 76–96, 142–162, 184–206, 222–242, 326–346, and 352–372; these read SLFK…VLLG, LIKM…IAGM, VALI…LVVV, IGAF…LFGF, VFFG…AMAF, LIVC…GLIA, IWHQ…AAGV, and IVLA…LALI.

This sequence belongs to the dicarboxylate/amino acid:cation symporter (DAACS) (TC 2.A.23) family.

Its subcellular location is the cell inner membrane. Responsible for the transport of dicarboxylates such as succinate, fumarate, and malate from the periplasm across the membrane. This Erwinia tasmaniensis (strain DSM 17950 / CFBP 7177 / CIP 109463 / NCPPB 4357 / Et1/99) protein is C4-dicarboxylate transport protein.